A 244-amino-acid chain; its full sequence is Na(+)-translocating NADH-quinone reductase subunit E (244 aa).

Helical transmembrane passes span 11–31 (LLGI…TFLG), 50–70 (MSVA…HYFI), 90–110 (FLEL…LELL), 123–143 (GIFL…LFGI), 153–173 (VVFS…FATI), and 191–211 (ISFI…GIDI).

It belongs to the NqrDE/RnfAE family. Composed of six subunits; NqrA, NqrB, NqrC, NqrD, NqrE and NqrF.

It is found in the cell inner membrane. It catalyses the reaction a ubiquinone + n Na(+)(in) + NADH + H(+) = a ubiquinol + n Na(+)(out) + NAD(+). Its function is as follows. NQR complex catalyzes the reduction of ubiquinone-1 to ubiquinol by two successive reactions, coupled with the transport of Na(+) ions from the cytoplasm to the periplasm. NqrA to NqrE are probably involved in the second step, the conversion of ubisemiquinone to ubiquinol. In Chlamydia trachomatis serovar L2 (strain ATCC VR-902B / DSM 19102 / 434/Bu), this protein is Na(+)-translocating NADH-quinone reductase subunit E.